We begin with the raw amino-acid sequence, 928 residues long: DNA polymerase I (928 aa).

Positions 1–323 (MVQIPENPLI…IDESPSEPAA (323 aa)) constitute a 5'-3' exonuclease domain. Residues 324–517 (ALSYENYVTI…LHLKMWPELQ (194 aa)) enclose the 3'-5' exonuclease domain. Residues 324-928 (ALSYENYVTI…GSGENWDQAH (605 aa)) form a klenow fragment region. Residues 521–928 (GPLNVFENIE…GSGENWDQAH (408 aa)) form a polymerase region.

The protein belongs to the DNA polymerase type-A family. As to quaternary structure, single-chain monomer with multiple functions.

It carries out the reaction DNA(n) + a 2'-deoxyribonucleoside 5'-triphosphate = DNA(n+1) + diphosphate. Its function is as follows. In addition to polymerase activity, this DNA polymerase exhibits 3'-5' and 5'-3' exonuclease activity. It is able to utilize nicked circular duplex DNA as a template and can unwind the parental DNA strand from its template. This Salmonella typhimurium (strain LT2 / SGSC1412 / ATCC 700720) protein is DNA polymerase I (polA).